A 378-amino-acid polypeptide reads, in one-letter code: Erythronate-4-phosphate dehydrogenase (378 aa).

Substrate-binding residues include Ser45 and Thr66. 2 residues coordinate NAD(+): Asp142 and Thr169. Arg202 is a catalytic residue. Asp226 provides a ligand contact to NAD(+). The active site involves Glu231. The active-site Proton donor is His248. Residue Gly251 coordinates NAD(+). Tyr252 lines the substrate pocket.

This sequence belongs to the D-isomer specific 2-hydroxyacid dehydrogenase family. PdxB subfamily. As to quaternary structure, homodimer.

It is found in the cytoplasm. It carries out the reaction 4-phospho-D-erythronate + NAD(+) = (R)-3-hydroxy-2-oxo-4-phosphooxybutanoate + NADH + H(+). It functions in the pathway cofactor biosynthesis; pyridoxine 5'-phosphate biosynthesis; pyridoxine 5'-phosphate from D-erythrose 4-phosphate: step 2/5. In terms of biological role, catalyzes the oxidation of erythronate-4-phosphate to 3-hydroxy-2-oxo-4-phosphonooxybutanoate. The chain is Erythronate-4-phosphate dehydrogenase from Cellvibrio japonicus (strain Ueda107) (Pseudomonas fluorescens subsp. cellulosa).